Reading from the N-terminus, the 250-residue chain is Small ribosomal subunit protein uS2 (250 aa).

It belongs to the universal ribosomal protein uS2 family.

The sequence is that of Small ribosomal subunit protein uS2 from Teredinibacter turnerae (strain ATCC 39867 / T7901).